The primary structure comprises 209 residues: GTP cyclohydrolase 1 (209 aa).

Zn(2+)-binding residues include cysteine 89, histidine 92, and cysteine 163.

It belongs to the GTP cyclohydrolase I family. In terms of assembly, toroid-shaped homodecamer, composed of two pentamers of five dimers.

It carries out the reaction GTP + H2O = 7,8-dihydroneopterin 3'-triphosphate + formate + H(+). The protein operates within cofactor biosynthesis; 7,8-dihydroneopterin triphosphate biosynthesis; 7,8-dihydroneopterin triphosphate from GTP: step 1/1. This Sulfolobus acidocaldarius (strain ATCC 33909 / DSM 639 / JCM 8929 / NBRC 15157 / NCIMB 11770) protein is GTP cyclohydrolase 1.